Here is a 1443-residue protein sequence, read N- to C-terminus: MVFDTETEKGKRIWALSQFLVKKNILDHNELHQLNNRIELVYLENDRENALFLVALTLKKPLTIDIWNALYEGFQDAEGAELRITFQEDATFFKDGSTKSSVTLAIIKDYFKSFFGKDKKYRILLEQELTHPNFLSYSNHELKANCQSQELDQWLIEQRQAFIKWMHQAGFTHFGFVSLFNPPAEKQLKVKSMKVSKYDKQFETEVFSTEFVPIHKINQQMDEIKLMGQIFELKDFPGYNNLRNTLNIYVTDFQLGGSLILKWFYKDPKTIEGIKIGTWVKATVKVERDAKTQLLQGIIKEISPIETPAYYRRPDQDKQKRVELVFHTKMSAFDGINSVQEYAQFAKERDWKTIAVTDKDNIHIYPTLYEVAKKYGLKAIYGLECNLIDDHIKIVSNPDKTKLKDATFVIFDIETTGLHGRYDSVIEFAGIKVKHNREVERMQFFLKIDGPLPAAVTEITKITQAQLEDGMEQQAGLEKLRAWLDGCVMVAHNGLSFDLPFLQTQFEKYNIAPLTNPLIDTLALSWALNPGFASHTLSNICAKLKFDFDDERLHRADYDTQALKKVFDYFKEQVELMGITNLEQLDQELNQQCHFELLKRTFTNTGIIYIKSQSGFAKLYELLSIALTDNNATRPLVLTSTLQKFAKSFVITDNPVQGDIFKAALTKPLKELEAAIKRVDFVLIAPPGAYAGYTIREGLKKEAIPNAIKLVVDTAQRLNKLVAVASDAYFIHPWENEYYKAIVCAKGLGGRWHRHFNYKEREQRVPNVFVRTTGEMLNEMSFLGEQLAYELVVENTNKLAKQLTADDLVPVQTKLQPPVIEGSNENLAAKTWSQAKAIYGDPLPKLIEQRIQEELKAIIDNGFGIIYWISHLLVKQSVQDGYFVGPRGSIGSSLVANLIGISEINPLVPHYLCESCQYFEVNEEVDDGYDLMVRDCPKCGAKAAFKGDGHNIPFATFMGFAGDKIPDIDLNFSSEYQAKAHAYVRELFGEQYTFRAGTIATVAEKTAYGYARNYFEIIKQTELATAPEIERFKQKLVGIKRTTGQHPGGIMIFPNHKSVYEFTPCGYPADDTSSDWKTTHFEYDALGNTILKLDILGQDDPTMLKHLGDLTHVNPQNIPRFDKKLTEMFWSVNPLKLKPHYLDEPTGAIGIPEFGTKFVRKILEQTKPKGFGDLIRVSGLSHGKNVWADNAQKILKDQNLSLKDVIACRDDIMLYLIHKGMQAKDAFEIMEKVRKGIALNAKEVQLMQSNGVEQHWINSCLKISYLFPKAHAAAYVLMAWRIAWFKLYHPLSYYACLLSFKLKEHDVSGFKSGVSFVKQKLEELNTLYRIKRIKPKEAELLTSYEVYLEMMARGIKLEQISLTHSHATRFVEHNGMLIAPFITIPGMGEAVANSIIEARNEKPFSSLDDFKKRTKITKKHIEAFTQMQLLDEFREQDNQKKLF.

Positions 408 to 567 (FVIFDIETTG…YDTQALKKVF (160 aa)) constitute an Exonuclease domain.

The protein belongs to the DNA polymerase type-C family. PolC subfamily.

It localises to the cytoplasm. The catalysed reaction is DNA(n) + a 2'-deoxyribonucleoside 5'-triphosphate = DNA(n+1) + diphosphate. Functionally, required for replicative DNA synthesis. This DNA polymerase also exhibits 3' to 5' exonuclease activity. This chain is DNA polymerase III PolC-type, found in Mycoplasma pneumoniae (strain ATCC 29342 / M129 / Subtype 1) (Mycoplasmoides pneumoniae).